A 214-amino-acid polypeptide reads, in one-letter code: Adenylate kinase (214 aa).

10-15 (GAGKGT) is an ATP binding site. Residues 30–59 (STGDMLRAAVKAGTPLGLEAKKVMDAGQLV) are NMP. AMP-binding positions include Thr31, Arg36, 57–59 (QLV), 85–88 (GFPR), and Gln92. Residues 122-159 (GRRVHSGSGRVYHVVFNPPKVEGKDDVTGEDLSIRPDD) are LID. ATP is bound by residues Arg123 and 132-133 (VY). Residues Arg156 and Arg167 each contribute to the AMP site. Gln200 contributes to the ATP binding site.

It belongs to the adenylate kinase family. As to quaternary structure, monomer.

The protein localises to the cytoplasm. The enzyme catalyses AMP + ATP = 2 ADP. Its pathway is purine metabolism; AMP biosynthesis via salvage pathway; AMP from ADP: step 1/1. Its function is as follows. Catalyzes the reversible transfer of the terminal phosphate group between ATP and AMP. Plays an important role in cellular energy homeostasis and in adenine nucleotide metabolism. In Shewanella denitrificans (strain OS217 / ATCC BAA-1090 / DSM 15013), this protein is Adenylate kinase.